The sequence spans 389 residues: Putative DNA processing protein DprA (389 aa).

The protein belongs to the DprA/Smf family.

Functionally, may help load RecA onto ssDNA. In Mycobacterium tuberculosis (strain CDC 1551 / Oshkosh), this protein is Putative DNA processing protein DprA.